The chain runs to 179 residues: Shikimate kinase (179 aa).

15–20 (GAGKTS) contributes to the ATP binding site. Thr-19 provides a ligand contact to Mg(2+). Substrate contacts are provided by Asp-37, Arg-61, and Gly-83. Arg-123 provides a ligand contact to ATP. Arg-142 contacts substrate.

Belongs to the shikimate kinase family. In terms of assembly, monomer. The cofactor is Mg(2+).

The protein resides in the cytoplasm. The enzyme catalyses shikimate + ATP = 3-phosphoshikimate + ADP + H(+). It functions in the pathway metabolic intermediate biosynthesis; chorismate biosynthesis; chorismate from D-erythrose 4-phosphate and phosphoenolpyruvate: step 5/7. Functionally, catalyzes the specific phosphorylation of the 3-hydroxyl group of shikimic acid using ATP as a cosubstrate. In Coxiella burnetii (strain CbuG_Q212) (Coxiella burnetii (strain Q212)), this protein is Shikimate kinase.